Here is a 54-residue protein sequence, read N- to C-terminus: Ovomucoid (54 aa).

The Kazal-like domain occupies 4–54 (VDCSEYPKPVCSPEYMPLCGSDSKTYNNKCDFCSAVVESNGTLTLGHFGKC). Cystine bridges form between Cys-6–Cys-36, Cys-14–Cys-33, and Cys-22–Cys-54. The N-linked (GlcNAc...) asparagine glycan is linked to Asn-43.

Its subcellular location is the secreted. The sequence is that of Ovomucoid from Casuarius casuarius (Southern cassowary).